The primary structure comprises 210 residues: N-(5'-phosphoribosyl)anthranilate isomerase (210 aa).

Belongs to the TrpF family.

The enzyme catalyses N-(5-phospho-beta-D-ribosyl)anthranilate = 1-(2-carboxyphenylamino)-1-deoxy-D-ribulose 5-phosphate. The protein operates within amino-acid biosynthesis; L-tryptophan biosynthesis; L-tryptophan from chorismate: step 3/5. The protein is N-(5'-phosphoribosyl)anthranilate isomerase of Magnetococcus marinus (strain ATCC BAA-1437 / JCM 17883 / MC-1).